A 95-amino-acid chain; its full sequence is Aspartyl/glutamyl-tRNA(Asn/Gln) amidotransferase subunit C (95 aa).

This sequence belongs to the GatC family. In terms of assembly, heterotrimer of A, B and C subunits.

The catalysed reaction is L-glutamyl-tRNA(Gln) + L-glutamine + ATP + H2O = L-glutaminyl-tRNA(Gln) + L-glutamate + ADP + phosphate + H(+). It catalyses the reaction L-aspartyl-tRNA(Asn) + L-glutamine + ATP + H2O = L-asparaginyl-tRNA(Asn) + L-glutamate + ADP + phosphate + 2 H(+). Functionally, allows the formation of correctly charged Asn-tRNA(Asn) or Gln-tRNA(Gln) through the transamidation of misacylated Asp-tRNA(Asn) or Glu-tRNA(Gln) in organisms which lack either or both of asparaginyl-tRNA or glutaminyl-tRNA synthetases. The reaction takes place in the presence of glutamine and ATP through an activated phospho-Asp-tRNA(Asn) or phospho-Glu-tRNA(Gln). In Rhizobium rhizogenes (strain K84 / ATCC BAA-868) (Agrobacterium radiobacter), this protein is Aspartyl/glutamyl-tRNA(Asn/Gln) amidotransferase subunit C.